Here is a 340-residue protein sequence, read N- to C-terminus: Phosphoribosylformylglycinamidine cyclo-ligase (340 aa).

This sequence belongs to the AIR synthase family.

It is found in the cytoplasm. It catalyses the reaction 2-formamido-N(1)-(5-O-phospho-beta-D-ribosyl)acetamidine + ATP = 5-amino-1-(5-phospho-beta-D-ribosyl)imidazole + ADP + phosphate + H(+). Its pathway is purine metabolism; IMP biosynthesis via de novo pathway; 5-amino-1-(5-phospho-D-ribosyl)imidazole from N(2)-formyl-N(1)-(5-phospho-D-ribosyl)glycinamide: step 2/2. This is Phosphoribosylformylglycinamidine cyclo-ligase from Streptococcus pyogenes serotype M2 (strain MGAS10270).